Consider the following 415-residue polypeptide: MKHLPAQDEQVFSAIQDERKRQQSKIELIASENFVSEAVMEAQGSVLTNKYAEGYPGKRYYGGCEHVDVAEDIARDRAKQIFGAEHVNVQPHSGAQANMAVYFTILEHGDTVLGMNLAHGGHLTHGSPVNFSGVQYNFVEYGVDKETQYIDYEDVREKALKHKPKLIVAGASAYPRTIDFKKFREIADEVGAYVMVDMAHIAGLVAAGLHPNPVPYADFVTTTTHKTLRGPRGGMILCREEFAKQIDKSIFPGIQGGPLMHVIAAKAVSFGEALKDEFKTYAQNVINNAKRLAETLKKEGIELVSGGTDNHLVLVDLRSLGITGKVAENVLDEVGITVNKNAIPYDPEKPFVTSGIRVGTAAVTSRGFDLEAIEEVGAIIALALKNHEDEAKLEEAKQRVEALTNRFPLYTGLDY.

(6S)-5,6,7,8-tetrahydrofolate contacts are provided by residues Leu-117 and 121–123 (GHL). Lys-226 is modified (N6-(pyridoxal phosphate)lysine). Residue Glu-241 participates in (6S)-5,6,7,8-tetrahydrofolate binding.

It belongs to the SHMT family. As to quaternary structure, homodimer. Pyridoxal 5'-phosphate is required as a cofactor.

The protein localises to the cytoplasm. The enzyme catalyses (6R)-5,10-methylene-5,6,7,8-tetrahydrofolate + glycine + H2O = (6S)-5,6,7,8-tetrahydrofolate + L-serine. It functions in the pathway one-carbon metabolism; tetrahydrofolate interconversion. The protein operates within amino-acid biosynthesis; glycine biosynthesis; glycine from L-serine: step 1/1. In terms of biological role, catalyzes the reversible interconversion of serine and glycine with tetrahydrofolate (THF) serving as the one-carbon carrier. This reaction serves as the major source of one-carbon groups required for the biosynthesis of purines, thymidylate, methionine, and other important biomolecules. Also exhibits THF-independent aldolase activity toward beta-hydroxyamino acids, producing glycine and aldehydes, via a retro-aldol mechanism. This chain is Serine hydroxymethyltransferase, found in Bacillus licheniformis (strain ATCC 14580 / DSM 13 / JCM 2505 / CCUG 7422 / NBRC 12200 / NCIMB 9375 / NCTC 10341 / NRRL NRS-1264 / Gibson 46).